The primary structure comprises 246 residues: MADS-box protein EJ2 (246 aa).

An MADS-box domain is found at 1-61 (MGRGRVELKR…GKLYEFCSTS (61 aa)). A K-box domain is found at 87-177 (TQNNYHEYLR…RRKLEESVAG (91 aa)).

The protein localises to the nucleus. In terms of biological role, MADS-box transcription factor that acts redundantly with J2 to control meristem maturation and inflorescence architecture. This Solanum lycopersicum (Tomato) protein is MADS-box protein EJ2.